The following is a 2476-amino-acid chain: Zonadhesin (2476 aa).

The first 29 residues, 1-29, serve as a signal peptide directing secretion; the sequence is MLGLPALAGPMAMPHPPLIPSTPTLLAFS. Residues 30-2418 are Extracellular-facing; sequence FPGGFYMLLD…SPKKPEASNR (2389 aa). MAM domains are found at residues 31–144 and 147–312; these read PGGF…PCEE and PQCD…TCRG. N-linked (GlcNAc...) asparagine glycosylation is found at Asn-109 and Asn-269. Disordered stretches follow at residues 313-332, 358-462, and 537-632; these read PSET…KPTV, PTVP…TERT, and ERTT…RTTI. The tract at residues 319-687 is 53 X approximate heptapeptide repeats (mucin-like domain); the sequence is STEKPVAPTE…ATTVTPRTTI (369 aa). Residues 358 to 373 are compositionally biased toward low complexity; that stretch reads PTVPTEKPTIPTEKST. Residues 400–412 show a composition bias toward pro residues; sequence TTPPEGPAVPPKG. Residues 423 to 433 are compositionally biased toward basic and acidic residues; that stretch reads HTEKSTVHTEK. The segment covering 451 to 462 has biased composition (low complexity); the sequence is PTKRTTTPTERT. The TIL 1 domain maps to 690 to 739; the sequence is CPPNAHFERCACPVSCQSPTPNCELFCKPGCVCDPGFLFSGSHCVNASSC. Residues Asn-735, Asn-758, and Asn-833 are each glycosylated (N-linked (GlcNAc...) asparagine). In terms of domain architecture, VWFC 1 spans 740 to 794; sequence DCFYNDNYYKLGTDWFSPNCTEHCHCRPSSRMECQTFKCGTHTVCQLKNGQYGCH. Residues 799–976 form the VWFD 1 domain; the sequence is ATCSVYGDPH…TSEDADQQCE (178 aa). 2 disulfides stabilise this stretch: Cys-801-Cys-936 and Cys-823-Cys-975. The interval 943-983 is disordered; sequence SSNDNQKPDGSPAKDEKELGSSWQTSEDADQQCEENQVSPP. Positions 1070–1123 constitute a TIL 2 domain; the sequence is CPRNSRYTLCARLCPDTCHSEFSGRACKDRCVEGCECDPGFVLSGLQCVSRSEC. The VWFC 2 domain maps to 1124-1180; it reads GCLDSTAGYVKVGERWFKPGCRQLCICEGNNRTRCVLWRCQAQEFCGQQDGIYGCHA. N-linked (GlcNAc...) asparagine glycosylation is present at Asn-1154. Positions 1184 to 1364 constitute a VWFD 2 domain; sequence ATCTVSGDPH…INELSEPGCF (181 aa). 2 cysteine pairs are disulfide-bonded: Cys-1186–Cys-1324 and Cys-1208–Cys-1363. N-linked (GlcNAc...) asparagine glycosylation is found at Asn-1329 and Asn-1448. The region spanning 1456–1511 is the TIL 3 domain; the sequence is CPSGSSYSTCANPCPATCLSLNNPSYCPSTLPCAEGCECQKGHILSGTSCVPLSQC. The VWFC 3 domain occupies 1512–1568; it reads GCTTQRGSYHPVGESWYTDNSCSRLCTCSAHNNISCRQASCKPSQMCWPQDGLIRCR. 3 N-linked (GlcNAc...) asparagine glycosylation sites follow: Asn-1544, Asn-1596, and Asn-1654. The region spanning 1573-1751 is the VWFD 3 domain; that stretch reads GVCRIPDTSH…RDKEIDPNCQ (179 aa). Cystine bridges form between Cys-1575/Cys-1712 and Cys-1597/Cys-1750. Positions 1747 to 1759 are enriched in basic and acidic residues; the sequence is DPNCQEDDRKTEA. Residues 1747–1768 are disordered; sequence DPNCQEDDRKTEAESQEQPSAN. Residue Asn-1843 is glycosylated (N-linked (GlcNAc...) asparagine). One can recognise a TIL 4 domain in the interval 1851–1907; it reads CSAHSVYTSCVPSCLPSCQDPEGQCTGAGAPSTCEEGCICEPGYVLSEQQCVARSQC. The 56-residue stretch at 1908-1963 folds into the VWFC 4 domain; that stretch reads GCRDARGTFLPVGRFRLSSGCSQMCVCTAGAIECRPFTCPSGSQCEPNEDGKDFCQ. Asn-1965 is a glycosylation site (N-linked (GlcNAc...) asparagine). One can recognise a VWFD 4 domain in the interval 1968-2145; the sequence is NLCSVFGDPH…WEVKAKEGHP (178 aa). Residues Cys-1970 and Cys-2107 are joined by a disulfide bond. N-linked (GlcNAc...) asparagine glycosylation is found at Asn-2122, Asn-2165, and Asn-2178. Positions 2257–2310 constitute a TIL 5 domain; the sequence is CPANTVYQSCMTPCPASCATLAVPRACDGPCVEGCASLPGYIYSGAQSLPMAHC. The VWFC 5 domain occupies 2311-2365; the sequence is GCTNNGVYYQQGDSFVTENCSQRCTCASSGVLLCEPLSCRPGEICTLGNLTRGCF. N-linked (GlcNAc...) asparagine glycosylation is found at Asn-2329 and Asn-2359. An EGF-like domain is found at 2366–2402; sequence RDSPCLQNPCQNDGRCREQGTHFTCECELGYGGDLCT. 3 disulfides stabilise this stretch: Cys-2370-Cys-2381, Cys-2375-Cys-2390, and Cys-2392-Cys-2401. Residues 2419–2439 form a helical membrane-spanning segment; it reads VAILLGMLMPTVLLVPAVTRV. Residues 2438–2476 form a disordered region; the sequence is RVSRKRRRRRRPSRERTQSQNRGKRAGTDCAPEQAYKVA. The segment covering 2439 to 2450 has biased composition (basic residues); that stretch reads VSRKRRRRRRPS. The Cytoplasmic segment spans residues 2440–2476; the sequence is SRKRRRRRRPSRERTQSQNRGKRAGTDCAPEQAYKVA.

In terms of assembly, probably forms covalent oligomers. Post-translationally, the MAM domains and the mucin-like domains are missing from the zonadhesin that binds to the egg extracellular matrix. Processing might occur during sperm maturation and/or capacitation. In terms of tissue distribution, in testis, primarily in haploid spermatids. Not in lung, liver, heart, spleen, brain, kidney, epididymis.

It is found in the cell membrane. In terms of biological role, binds in a species-specific manner to the zona pellucida of the egg. May be involved in gamete recognition and/or signaling. The sequence is that of Zonadhesin (ZAN) from Sus scrofa (Pig).